The primary structure comprises 587 residues: Putative adenylate cyclase 3 (587 aa).

The 116-residue stretch at 12 to 127 (AILAADAVGY…DGVNVAARIE (116 aa)) folds into the Guanylate cyclase domain. TPR repeat units follow at residues 343 to 376 (LLVRSRQAILQFNALSSMEARRMLHRVLEIDPGM), 421 to 454 (PQGHYTLALALSWMRRLDEAEHAAERAIELDPNS), 455 to 488 (ANAYTALGTIRDFQGRHEEALALYTRAHRLDPQF), 490 to 522 (LSLHFQGRALLNLGRFDEAEVAFKRRLLLAPRS), and 524 to 556 (MTRFYLACLYGRTGRHEEARGYWREVLGVNPSF).

It belongs to the adenylyl cyclase class-3 family.

The enzyme catalyses ATP = 3',5'-cyclic AMP + diphosphate. The polypeptide is Putative adenylate cyclase 3 (cya3) (Rhizobium meliloti (strain 1021) (Ensifer meliloti)).